A 366-amino-acid polypeptide reads, in one-letter code: 3-dehydroquinate synthase (366 aa).

NAD(+)-binding positions include 74–79 (SGEAAK), 108–112 (GVVGD), 132–133 (TT), K144, K153, and 171–174 (FLRT). Positions 186, 249, and 266 each coordinate Zn(2+).

Belongs to the sugar phosphate cyclases superfamily. Dehydroquinate synthase family. Requires Co(2+) as cofactor. Zn(2+) is required as a cofactor. It depends on NAD(+) as a cofactor.

Its subcellular location is the cytoplasm. The catalysed reaction is 7-phospho-2-dehydro-3-deoxy-D-arabino-heptonate = 3-dehydroquinate + phosphate. The protein operates within metabolic intermediate biosynthesis; chorismate biosynthesis; chorismate from D-erythrose 4-phosphate and phosphoenolpyruvate: step 2/7. Its function is as follows. Catalyzes the conversion of 3-deoxy-D-arabino-heptulosonate 7-phosphate (DAHP) to dehydroquinate (DHQ). This chain is 3-dehydroquinate synthase, found in Geobacillus thermodenitrificans (strain NG80-2).